A 388-amino-acid polypeptide reads, in one-letter code: GDP-4-keto-6-deoxy-D-mannose 3-dehydratase (388 aa).

GDP-4-dehydro-alpha-D-rhamnose is bound at residue 26–29 (KMFT). The chain crosses the membrane as a helical span at residues 49–69 (YAVMVSSGSTANLLMIAALFF). Pyridoxal 5'-phosphate-binding positions include 56–57 (GS), tryptophan 88, glutamate 162, and serine 183. The active-site Proton donor/acceptor is the histidine 188. Residue histidine 215 coordinates L-glutamate. Residue arginine 219 participates in GDP-4-dehydro-alpha-D-rhamnose binding. Asparagine 248 lines the pyridoxal 5'-phosphate pocket. Arginine 250 serves as a coordination point for L-glutamate. GDP-4-dehydro-alpha-D-rhamnose is bound at residue glutamate 329.

Belongs to the DegT/DnrJ/EryC1 family. Homodimer. Pyridoxal 5'-phosphate serves as cofactor.

It is found in the cell membrane. The enzyme catalyses GDP-4-dehydro-alpha-D-rhamnose + L-glutamate = GDP-4-dehydro-3,6-dideoxy-alpha-D-mannose + 2-oxoglutarate + NH4(+). The protein operates within nucleotide-sugar metabolism; GDP-L-colitose biosynthesis. In terms of biological role, involved in the biosynthesis of L-colitose, a 3,6-dideoxyhexose present in the O-antigen region of lipopolysaccharides (LPS), where it serves as an antigenic determinant and is vital for bacterial defense and survival. Catalyzes the removal of the C3'-hydroxyl group from GDP-4-keto-6-deoxy-D-mannose via a combined transamination-deoxygenation reaction. The catalysis is initiated by a transamination step in which pyridoxal 5'-phosphate (PLP) is converted to pyridoxamine 5'-phosphate (PMP) in the presence of L-glutamate. This coenzyme then forms a Schiff base with GDP-4-keto-6-deoxy-D-mannose and the resulting adduct undergoes a PMP-mediated beta-dehydration reaction to give a sugar enamine intermediate, which after tautomerization and hydrolysis to release ammonia yields GDP-4-keto-3,6-dideoxy-D-mannose as a product. In vitro, is able to catalyze the formation of GDP-4-keto-3,6-dideoxymannose using GDP-perosamine rather than GDP-4-keto-6-deoxymannose as a substrate, with no need of glutamate. This is GDP-4-keto-6-deoxy-D-mannose 3-dehydratase from Escherichia coli O55:H7 (strain CB9615 / EPEC).